Consider the following 229-residue polypeptide: Potassium/proton antiporter CemA (229 aa).

Helical transmembrane passes span 7 to 27, 107 to 127, and 189 to 209; these read FTPL…SFSV, ILHF…SILG, and IISG…KYWI.

This sequence belongs to the CemA family.

It is found in the plastid. The protein resides in the chloroplast inner membrane. It carries out the reaction K(+)(in) + H(+)(out) = K(+)(out) + H(+)(in). Its function is as follows. Contributes to K(+)/H(+) antiport activity by supporting proton efflux to control proton extrusion and homeostasis in chloroplasts in a light-dependent manner to modulate photosynthesis. Prevents excessive induction of non-photochemical quenching (NPQ) under continuous-light conditions. Indirectly promotes efficient inorganic carbon uptake into chloroplasts. This Atropa belladonna (Belladonna) protein is Potassium/proton antiporter CemA.